The primary structure comprises 495 residues: Protein adenylyltransferase Fic (495 aa).

The tract at residues 1 to 27 (MGTEAEQPSPPSPPAQQQEQTNPPLWN) is disordered. The chain crosses the membrane as a helical span at residues 36-55 (LYRLVLFFIAGSLAAWTIHA). 2 TPR repeats span residues 121 to 154 (ALVS…APRH) and 155 to 189 (PEVL…SPSN). Positions 246–251 (SVGIEG) match the Inhibitory (S/T)XXXE(G/N) motif motif. ATP-binding positions include glutamate 250 and 331–334 (VGGH). The region spanning 300–435 (ITIKDILELH…IRPFVRFIAD (136 aa)) is the Fido domain. The active site involves histidine 378. Residues 382–389 (DGNGRTSR), 414–415 (YY), and asparagine 422 each bind ATP.

The protein belongs to the fic family. Homodimer.

It localises to the membrane. The enzyme catalyses L-tyrosyl-[protein] + ATP = O-(5'-adenylyl)-L-tyrosyl-[protein] + diphosphate. It catalyses the reaction L-threonyl-[protein] + ATP = 3-O-(5'-adenylyl)-L-threonyl-[protein] + diphosphate. The catalysed reaction is 3-O-(5'-adenylyl)-L-threonyl-[protein] + H2O = L-threonyl-[protein] + AMP + H(+). Its activity is regulated as follows. The side chain of Glu-250 determines which of the two opposing activities (AMPylase or de-AMPylase) will take place. In response to endoplasmic reticulum stress, mediates de-AMPylase activity. Adenylyltransferase activity is inhibited by the inhibitory helix present at the N-terminus: Glu-250 binds ATP and competes with ATP-binding at Arg-389, thereby preventing adenylyltransferase activity. In unstressed cells, disengagement of Glu-250 promotes adenylyltransferase activity. Activation dissociates ATP-binding from Glu-250, allowing ordered binding of the entire ATP moiety with the alpha-phosphate in an orientation that is productive for accepting an incoming target hydroxyl side chain. Protein that can both mediate the addition of adenosine 5'-monophosphate (AMP) to specific residues of target proteins (AMPylation), and the removal of the same modification from target proteins (de-AMPylation), depending on the context. The side chain of Glu-250 determines which of the two opposing activities (AMPylase or de-AMPylase) will take place. Acts as a key regulator of the unfolded protein response (UPR) by mediating AMPylation or de-AMPylation of Hsc70-3/BiP. In unstressed cells, acts as an adenylyltransferase by mediating AMPylation of Hsc70-3/BiP at 'Thr-518', thereby inactivating it. In response to endoplasmic reticulum stress, acts as a phosphodiesterase by mediating removal of ATP (de-AMPylation) from Hsc70-3/BiP at 'Thr-518', leading to restore HSPA5/BiP activity. The protein is Protein adenylyltransferase Fic of Drosophila yakuba (Fruit fly).